Here is a 69-residue protein sequence, read N- to C-terminus: Cecropin-like peptide 1 (69 aa).

Positions 1–23 (MNFTKLFVVFAVVLVAFAGQSEA) are cleaved as a signal peptide. Residue Gln68 is modified to Glutamine amide.

As to expression, following bacterial infection, expressed in fat body, trachea and muscle.

It localises to the secreted. Antimicrobial peptide active against Gram-negative bacteria E.coli KCCM 11234 (MIC&lt;=1.03 uM), E.aerogenes KCCM 12177 (MIC&lt;=2.07 uM) and P.aeruginosa KCCM 11328 (MIC&lt;=2.07 uM). Not active against various Gram-positive bacteria at concentrations up to 4.14 uM. This is Cecropin-like peptide 1 from Hermetia illucens (Black soldier fly).